Here is a 174-residue protein sequence, read N- to C-terminus: Protein SHI RELATED SEQUENCE 3 (174 aa).

Zn(2+) contacts are provided by C9, C12, C20, C25, C29, and C36. Positions 9–36 (CEDCGNQAKKDCVYMRCRTCCKSKAFHC) form a DNA-binding region, zn(2)-C6 fungal-type; degenerate. The Required for homo- and heterodimerization signature appears at 110–113 (IGGH).

The protein belongs to the SHI protein family.

The protein localises to the nucleus. In terms of biological role, transcription activator that binds DNA on 5'-ACTCTAC-3' and promotes auxin homeostasis-regulating gene expression (e.g. YUC genes), as well as genes affecting stamen development, cell expansion and timing of flowering. Synergistically with other SHI-related proteins, regulates gynoecium, stamen and leaf development in a dose-dependent manner, controlling apical-basal patterning. Promotes style and stigma formation, and influences vascular development during gynoecium development. May also have a role in the formation and/or maintenance of the shoot apical meristem (SAM). This Arabidopsis thaliana (Mouse-ear cress) protein is Protein SHI RELATED SEQUENCE 3 (SRS3).